The primary structure comprises 254 residues: uncharacterized protein (254 aa).

The NADP(+) site is built by isoleucine 18, serine 37, aspartate 63, asparagine 90, tyrosine 159, lysine 163, valine 192, and threonine 194. Tyrosine 159 functions as the Proton donor in the catalytic mechanism. The Lowers pKa of active site Tyr role is filled by lysine 163.

Belongs to the short-chain dehydrogenases/reductases (SDR) family.

The protein resides in the cytoplasm. It localises to the nucleus. This is an uncharacterized protein from Schizosaccharomyces pombe (strain 972 / ATCC 24843) (Fission yeast).